Reading from the N-terminus, the 371-residue chain is Queuine tRNA-ribosyltransferase (371 aa).

The active-site Proton acceptor is D90. Substrate-binding positions include 90–94, D144, Q185, and G212; that span reads DSGGF. The tract at residues 243 to 249 is RNA binding; sequence GVGTPED. The active-site Nucleophile is the D262. The interval 267 to 271 is RNA binding; important for wobble base 34 recognition; that stretch reads TRNAR. Zn(2+) contacts are provided by C300, C302, C305, and H331.

The protein belongs to the queuine tRNA-ribosyltransferase family. Homodimer. Within each dimer, one monomer is responsible for RNA recognition and catalysis, while the other monomer binds to the replacement base PreQ1. Zn(2+) is required as a cofactor.

It carries out the reaction 7-aminomethyl-7-carbaguanine + guanosine(34) in tRNA = 7-aminomethyl-7-carbaguanosine(34) in tRNA + guanine. The protein operates within tRNA modification; tRNA-queuosine biosynthesis. Catalyzes the base-exchange of a guanine (G) residue with the queuine precursor 7-aminomethyl-7-deazaguanine (PreQ1) at position 34 (anticodon wobble position) in tRNAs with GU(N) anticodons (tRNA-Asp, -Asn, -His and -Tyr). Catalysis occurs through a double-displacement mechanism. The nucleophile active site attacks the C1' of nucleotide 34 to detach the guanine base from the RNA, forming a covalent enzyme-RNA intermediate. The proton acceptor active site deprotonates the incoming PreQ1, allowing a nucleophilic attack on the C1' of the ribose to form the product. After dissociation, two additional enzymatic reactions on the tRNA convert PreQ1 to queuine (Q), resulting in the hypermodified nucleoside queuosine (7-(((4,5-cis-dihydroxy-2-cyclopenten-1-yl)amino)methyl)-7-deazaguanosine). This is Queuine tRNA-ribosyltransferase from Acidithiobacillus ferrooxidans (strain ATCC 23270 / DSM 14882 / CIP 104768 / NCIMB 8455) (Ferrobacillus ferrooxidans (strain ATCC 23270)).